A 423-amino-acid polypeptide reads, in one-letter code: Protein CLP1 homolog (423 aa).

ATP is bound by residues E19, K60, and 122–127 (DVGKTT).

This sequence belongs to the Clp1 family. Clp1 subfamily.

Its subcellular location is the nucleus. Its function is as follows. Required for endonucleolytic cleavage during polyadenylation-dependent pre-mRNA 3'-end formation. This chain is Protein CLP1 homolog (cbc), found in Anopheles gambiae (African malaria mosquito).